Reading from the N-terminus, the 32-residue chain is Photosystem I reaction center subunit XII (32 aa).

A helical transmembrane segment spans residues 10–27 (VVALVSAFVTGILALRLG).

The protein belongs to the PsaM family.

The protein resides in the plastid. Its subcellular location is the chloroplast thylakoid membrane. This is Photosystem I reaction center subunit XII from Staurastrum punctulatum (Green alga).